Consider the following 462-residue polypeptide: ATP synthase subunit beta (462 aa).

152 to 159 serves as a coordination point for ATP; that stretch reads GGAGVGKT.

Belongs to the ATPase alpha/beta chains family. F-type ATPases have 2 components, CF(1) - the catalytic core - and CF(0) - the membrane proton channel. CF(1) has five subunits: alpha(3), beta(3), gamma(1), delta(1), epsilon(1). CF(0) has three main subunits: a(1), b(2) and c(9-12). The alpha and beta chains form an alternating ring which encloses part of the gamma chain. CF(1) is attached to CF(0) by a central stalk formed by the gamma and epsilon chains, while a peripheral stalk is formed by the delta and b chains.

The protein resides in the cell inner membrane. It catalyses the reaction ATP + H2O + 4 H(+)(in) = ADP + phosphate + 5 H(+)(out). Functionally, produces ATP from ADP in the presence of a proton gradient across the membrane. The catalytic sites are hosted primarily by the beta subunits. In Shewanella amazonensis (strain ATCC BAA-1098 / SB2B), this protein is ATP synthase subunit beta.